The following is a 94-amino-acid chain: Sucrose operon repressor (94 aa).

Residues 1–56 form the HTH lacI-type domain; the sequence is MASLHDVARLAGVSKSTVSRVINDEYGVKEATKQKVRQAVAECGYVPNQVAKDLKE. A DNA-binding region (H-T-H motif) is located at residues 4 to 23; sequence LHDVARLAGVSKSTVSRVIN.

Functionally, repressor for the scr operon. Binds D-fructose as an inducer. The chain is Sucrose operon repressor (scrR) from Vibrio alginolyticus.